The chain runs to 125 residues: Small ribosomal subunit protein uS11 (125 aa).

It belongs to the universal ribosomal protein uS11 family. Part of the 30S ribosomal subunit. Interacts with proteins S7 and S18. Binds to IF-3.

In terms of biological role, located on the platform of the 30S subunit, it bridges several disparate RNA helices of the 16S rRNA. Forms part of the Shine-Dalgarno cleft in the 70S ribosome. This is Small ribosomal subunit protein uS11 from Coprothermobacter proteolyticus (strain ATCC 35245 / DSM 5265 / OCM 4 / BT).